A 261-amino-acid polypeptide reads, in one-letter code: NAD-capped RNA hydrolase NudC (261 aa).

Arginine 74 contributes to the substrate binding site. Residues cysteine 103, cysteine 106, cysteine 121, and cysteine 124 each coordinate Zn(2+). Position 129 (tyrosine 129) interacts with substrate. The Nudix hydrolase domain maps to 130 to 253; the sequence is PRIFPCIIVA…TIARALIEQT (124 aa). The a divalent metal cation site is built by alanine 163, glutamate 179, and glutamate 183. A Nudix box motif is present at residues 164 to 185; it reads GFVEVGETLEQCVAREVKEETG. 197–204 is a substrate binding site; sequence QPWAFPSS. Glutamate 224 is a binding site for a divalent metal cation. A substrate-binding site is contributed by alanine 246.

It belongs to the Nudix hydrolase family. NudC subfamily. Homodimer. It depends on Mg(2+) as a cofactor. Mn(2+) is required as a cofactor. The cofactor is Zn(2+).

The enzyme catalyses a 5'-end NAD(+)-phospho-ribonucleoside in mRNA + H2O = a 5'-end phospho-adenosine-phospho-ribonucleoside in mRNA + beta-nicotinamide D-ribonucleotide + 2 H(+). The catalysed reaction is NAD(+) + H2O = beta-nicotinamide D-ribonucleotide + AMP + 2 H(+). It catalyses the reaction NADH + H2O = reduced beta-nicotinamide D-ribonucleotide + AMP + 2 H(+). In terms of biological role, mRNA decapping enzyme that specifically removes the nicotinamide adenine dinucleotide (NAD) cap from a subset of mRNAs by hydrolyzing the diphosphate linkage to produce nicotinamide mononucleotide (NMN) and 5' monophosphate mRNA. The NAD-cap is present at the 5'-end of some mRNAs and stabilizes RNA against 5'-processing. Has preference for mRNAs with a 5'-end purine. Catalyzes the hydrolysis of a broad range of dinucleotide pyrophosphates. This chain is NAD-capped RNA hydrolase NudC, found in Vibrio vulnificus (strain CMCP6).